The sequence spans 20 residues: Conotoxin PnMLKM-D0211 (20 aa).

A propeptide spanning residues 1–3 is cleaved from the precursor; it reads VKR. Cystine bridges form between C4–C18, C5–C14, and C10–C17. P16 is modified (4-hydroxyproline). W19 carries the post-translational modification Tryptophan amide.

It belongs to the conotoxin M superfamily. Expressed by the venom duct.

It localises to the secreted. This is Conotoxin PnMLKM-D0211 from Conus pennaceus (Feathered cone).